A 21-amino-acid chain; its full sequence is Peptide PGLa-B2 (21 aa).

The residue at position 21 (Leu21) is a Leucine amide.

In terms of tissue distribution, expressed by the skin glands.

It localises to the secreted. Functionally, has antimicrobial activity against Gram-negative bacterium E.coli ATCC 25922 (MIC=25 uM), Gram-positive bacterium S.auerus ATCC 25923 (MIC=50 uM) and against fungus C.albicans ATCC 90028 (MIC=25 uM). Has some hemolytic activity against human erythrocytes at high concentration. The polypeptide is Peptide PGLa-B2 (Xenopus borealis (Kenyan clawed frog)).